The following is a 476-amino-acid chain: Sulfate adenylyltransferase subunit 1 (476 aa).

In terms of domain architecture, tr-type G spans 25–241 (KSLLRFLTCG…LETVEVQRVV (217 aa)). The tract at residues 34–41 (GSVDDGKS) is G1. 34–41 (GSVDDGKS) contributes to the GTP binding site. The interval 92-96 (GITID) is G2. The tract at residues 113–116 (DTPG) is G3. GTP is bound by residues 113–117 (DTPGH) and 168–171 (NKMD). Residues 168-171 (NKMD) are G4. Residues 206–208 (SAL) form a G5 region.

This sequence belongs to the TRAFAC class translation factor GTPase superfamily. Classic translation factor GTPase family. CysN/NodQ subfamily. In terms of assembly, heterodimer composed of CysD, the smaller subunit, and CysN.

It carries out the reaction sulfate + ATP + H(+) = adenosine 5'-phosphosulfate + diphosphate. It functions in the pathway sulfur metabolism; hydrogen sulfide biosynthesis; sulfite from sulfate: step 1/3. In terms of biological role, with CysD forms the ATP sulfurylase (ATPS) that catalyzes the adenylation of sulfate producing adenosine 5'-phosphosulfate (APS) and diphosphate, the first enzymatic step in sulfur assimilation pathway. APS synthesis involves the formation of a high-energy phosphoric-sulfuric acid anhydride bond driven by GTP hydrolysis by CysN coupled to ATP hydrolysis by CysD. The protein is Sulfate adenylyltransferase subunit 1 of Erwinia tasmaniensis (strain DSM 17950 / CFBP 7177 / CIP 109463 / NCPPB 4357 / Et1/99).